The sequence spans 782 residues: Acetazolamide conferring resistance protein zam (782 aa).

One can recognise an RNB domain in the interval 270 to 579 (EVALSLESQA…QRLLKLVLTE (310 aa)). Residues 655-736 (GEIFRGLITG…YRQQIDLGAV (82 aa)) form the S1 motif domain. The segment at 737–782 (NNAPKDSANMDFDDDDEDGDEREEQDTMDWDAMEDGDDDEGGAVIF) is disordered. A compositionally biased stretch (acidic residues) spans 747–782 (DFDDDDEDGDEREEQDTMDWDAMEDGDDDEGGAVIF).

The protein belongs to the RNR ribonuclease family.

Its function is as follows. Not known; control resistance to the carbonic anhydrase inhibitor acetazolamide. The chain is Acetazolamide conferring resistance protein zam (zam) from Synechocystis sp. (strain ATCC 27184 / PCC 6803 / Kazusa).